The primary structure comprises 2130 residues: DNA polymerase zeta catalytic subunit (2130 aa).

Disordered regions lie at residues 528–635, 734–891, 927–954, and 1189–1243; these read PAES…TGTL, GCEI…HDEA, FTPS…SNTP, and QAKD…SAAQ. The span at 553–574 shows a compositional bias: low complexity; that stretch reads TPIKSISSKSKSSPSKTPTTPI. The segment covering 620 to 629 has biased composition (polar residues); the sequence is PRLSLQLDQG. Over residues 735-753 the composition is skewed to basic and acidic residues; it reads CEIERPHRSEGSALDELKP. Composition is skewed to polar residues over residues 771–786, 794–808, and 818–835; these read SEIQ…TSLD, LSQS…SMNG, and DSSS…SVSE. Over residues 840-860 the composition is skewed to basic and acidic residues; the sequence is LESKPKKSDETARSCDEKLQR. Over residues 938–954 the composition is skewed to polar residues; sequence TETTPQLSPKSNESNTP. The span at 1228 to 1243 shows a compositional bias: low complexity; the sequence is PSSQSSEQSVSSSAAQ. Zn(2+)-binding residues include C2041, C2045, C2054, and C2057. [4Fe-4S] cluster contacts are provided by C2086, C2089, C2098, and C2103. The CysB motif signature appears at 2086–2103; the sequence is CQACCGRLGSLQCDSLDC.

It belongs to the DNA polymerase type-B family. As to quaternary structure, catalytic subunit of the zeta DNA polymerase complex, which consists of PolZ1/DNApol-zeta and the accessory component PolZ2/Rev7. Interacts with the apurinic/apyrimidinic (AP) endonuclease Rrp1; the interaction is likely indirect and mediated via PolZ2. It depends on [4Fe-4S] cluster as a cofactor.

It catalyses the reaction DNA(n) + a 2'-deoxyribonucleoside 5'-triphosphate = DNA(n+1) + diphosphate. With respect to regulation, inhibited by tetracyclic diterpene antibiotic aphidicolin. As the catalytic subunit of the DNA polymerase zeta complex, plays a crucial role in translesion DNA synthesis (TLS) and various DNA repair mechanisms. Lacks an intrinsic 3'-5' exonuclease activity and thus has no proofreading function. During homologous recombination (HR) repair, has a overlapping role with the error-prone translesion polymerase eta to initiate repair synthesis which is completed by end joining or another polymerase that can bind and reinitiate synthesis. May participate in the Rrp1-dependent base excision repair (BER) pathway responsible for repair of DNA lesions that gives rise to apurinic/apyrimidinic (AP) sites. Unlike mammalian orthologs, it is not an error-prone polymerase. The polypeptide is DNA polymerase zeta catalytic subunit (Drosophila melanogaster (Fruit fly)).